Reading from the N-terminus, the 173-residue chain is MSEEVQERIWILITPDKCSGCRLCEVTCSLEHEGIIWPEASRIRVFELFPGINVPHTCVQCPDYPCVNACPTNALSVDEKTGAVVVNEEKCITCGACVLACPGKVPRIPAGKGSVVICDLCGGNPKCVEICHEAGHDALKIVTGNYRPIYRTFAKDPQEKSLDIARKVFGEDF.

4Fe-4S ferredoxin-type domains are found at residues 9–40 (IWILITPDKCSGCRLCEVTCSLEHEGIIWPEA), 48–80 (LFPGINVPHTCVQCPDYPCVNACPTNALSVDEK), and 82–111 (GAVVVNEEKCITCGACVLACPGKVPRIPAG). [4Fe-4S] cluster contacts are provided by cysteine 18, cysteine 21, cysteine 24, cysteine 28, cysteine 58, cysteine 61, cysteine 66, cysteine 70, cysteine 91, cysteine 94, cysteine 97, cysteine 101, cysteine 118, cysteine 121, cysteine 127, and cysteine 131.

Heterodimer composed of a small WOR5-S subunit, with four [4Fe-4S] clusters, and a large WOR5-L subunit, containing the active site tungsto-bispyranopterin cofactor as well as another [4Fe-4S] cluster. It depends on [4Fe-4S] cluster as a cofactor.

The protein localises to the cytoplasm. In terms of biological role, polyferredoxin-like subunit of an oxidoreductase that can desulfonate and oxidize aliphatic sulfonates such as taurine. May serve as a an electron-transfer subunit between the catalytic subunit and ferredoxin. In Pyrococcus furiosus (strain ATCC 43587 / DSM 3638 / JCM 8422 / Vc1), this protein is Aliphatic sulfonate oxidoreductase, polyferredoxin-like subunit.